We begin with the raw amino-acid sequence, 269 residues long: MNPKIIFLDAVREHNPLIHNITNLVSAHFTANGLLALGASPMMAESPDEMAELATISSAVVLNLGTPSDEKVSAMLAAGMAANQAGVPVVLDPVAVGASHLRQKTVATLTQNIQFAAIRGNAGELAYLADVQWASKGVDAGQGSGNLAEIAQKVAQKFNTIAVLSGEHDFVANHDRVMKLSNGVALFPKVTATGCLLSAIVGAFLAVAPRELAFQAACEACTVYAIAGELAAVGLQATQSGTFAVRLLDALAAIDATQTEQLMKAEWII.

A substrate-binding site is contributed by methionine 43. 2 residues coordinate ATP: arginine 119 and serine 165. A substrate-binding site is contributed by alanine 192.

Belongs to the Thz kinase family. The cofactor is Mg(2+).

The enzyme catalyses 5-(2-hydroxyethyl)-4-methylthiazole + ATP = 4-methyl-5-(2-phosphooxyethyl)-thiazole + ADP + H(+). It functions in the pathway cofactor biosynthesis; thiamine diphosphate biosynthesis; 4-methyl-5-(2-phosphoethyl)-thiazole from 5-(2-hydroxyethyl)-4-methylthiazole: step 1/1. Functionally, catalyzes the phosphorylation of the hydroxyl group of 4-methyl-5-beta-hydroxyethylthiazole (THZ). This Glaesserella parasuis serovar 5 (strain SH0165) (Haemophilus parasuis) protein is Hydroxyethylthiazole kinase.